Here is a 121-residue protein sequence, read N- to C-terminus: Small ribosomal subunit protein uS13 (121 aa).

The segment at 91–121 (HRRGLPVRGQNSKNNARTRKGPRRTVANKKK) is disordered. Basic residues predominate over residues 106-121 (ARTRKGPRRTVANKKK).

The protein belongs to the universal ribosomal protein uS13 family. Part of the 30S ribosomal subunit. Forms a loose heterodimer with protein S19. Forms two bridges to the 50S subunit in the 70S ribosome.

Located at the top of the head of the 30S subunit, it contacts several helices of the 16S rRNA. In the 70S ribosome it contacts the 23S rRNA (bridge B1a) and protein L5 of the 50S subunit (bridge B1b), connecting the 2 subunits; these bridges are implicated in subunit movement. Contacts the tRNAs in the A and P-sites. This Bacillus cereus (strain G9842) protein is Small ribosomal subunit protein uS13.